Here is a 27-residue protein sequence, read N- to C-terminus: uncharacterized protein (27 aa).

The protein resides in the plastid. It localises to the chloroplast. This is an uncharacterized protein from Marchantia polymorpha (Common liverwort).